A 360-amino-acid chain; its full sequence is uncharacterized protein (360 aa).

The ABC transporter domain maps to 4–235; sequence LSLQHIQKIY…PANMFVSGFI (232 aa). ATP is bound at residue 37–44; the sequence is GPSGCGKS.

This sequence belongs to the ABC transporter superfamily.

This is an uncharacterized protein from Escherichia coli (strain K12).